Consider the following 532-residue polypeptide: Bifunctional purine biosynthesis protein PurH (532 aa).

One can recognise an MGS-like domain in the interval 1–147 (MADRPIRQAL…KNHKDVAIVV (147 aa)).

It belongs to the PurH family.

It catalyses the reaction (6R)-10-formyltetrahydrofolate + 5-amino-1-(5-phospho-beta-D-ribosyl)imidazole-4-carboxamide = 5-formamido-1-(5-phospho-D-ribosyl)imidazole-4-carboxamide + (6S)-5,6,7,8-tetrahydrofolate. The catalysed reaction is IMP + H2O = 5-formamido-1-(5-phospho-D-ribosyl)imidazole-4-carboxamide. It functions in the pathway purine metabolism; IMP biosynthesis via de novo pathway; 5-formamido-1-(5-phospho-D-ribosyl)imidazole-4-carboxamide from 5-amino-1-(5-phospho-D-ribosyl)imidazole-4-carboxamide (10-formyl THF route): step 1/1. It participates in purine metabolism; IMP biosynthesis via de novo pathway; IMP from 5-formamido-1-(5-phospho-D-ribosyl)imidazole-4-carboxamide: step 1/1. The protein is Bifunctional purine biosynthesis protein PurH of Haemophilus influenzae (strain ATCC 51907 / DSM 11121 / KW20 / Rd).